Reading from the N-terminus, the 413-residue chain is Protein FAM8A1 (413 aa).

Positions 1–10 (MAEGPEEARG) are enriched in basic and acidic residues. Residues 1–105 (MAEGPEEARG…PEAAAPRERP (105 aa)) are disordered. Residues 49-64 (APGRPTAPGLAAAAAA) show a composition bias toward low complexity. The segment covering 65 to 78 (DKLEPPRELRKRGE) has biased composition (basic and acidic residues). The interval 107 to 139 (RLSAREYSRQVHEWLWQSYCGYLTWHSGLAAFP) is necessary and sufficient to interact with SYVN1. Residues 217–236 (PVTRVGSAAPSRSPSETGRQ) are disordered. A Phosphoserine modification is found at S229. In terms of domain architecture, RDD spans 242–408 (VIPSLAHRFM…DIVAGTIVVK (167 aa)). A run of 3 helical transmembrane segments spans residues 257-277 (FFILFFIKATIVLSIMHLSGI), 304-324 (MMVVALIYRLLVCFYEIICIW), and 371-391 (ALIKNFSIASFFPAFITLLFF).

As to quaternary structure, component of the HRD1 complex, which comprises at least SYNV1/HRD1, FAM8A1, HERPUD1/HERP, OS9, SEL1L and UBE2J1. This interaction stabilizes FAM8A1 protein, preventing its proteasomal degradation. FAM8A1 binding to SYNV1 may promote recruitment of HERPUD1 to the HRD1 complex. In terms of tissue distribution, ubiquitously expressed, with a higher level of expression in testis.

Its subcellular location is the membrane. In terms of biological role, plays a role in the assembly of the HRD1 complex, a complex involved in the ubiquitin-proteasome-dependent process of ER-associated degradation (ERAD). The sequence is that of Protein FAM8A1 (FAM8A1) from Homo sapiens (Human).